Consider the following 103-residue polypeptide: Large ribosomal subunit protein bL21 (103 aa).

This sequence belongs to the bacterial ribosomal protein bL21 family. Part of the 50S ribosomal subunit. Contacts protein L20.

In terms of biological role, this protein binds to 23S rRNA in the presence of protein L20. The protein is Large ribosomal subunit protein bL21 of Desulforapulum autotrophicum (strain ATCC 43914 / DSM 3382 / VKM B-1955 / HRM2) (Desulfobacterium autotrophicum).